Reading from the N-terminus, the 261-residue chain is Thiazole synthase (261 aa).

Lys98 (schiff-base intermediate with DXP) is an active-site residue. 1-deoxy-D-xylulose 5-phosphate contacts are provided by residues Gly159, 185 to 186 (AG), and 207 to 208 (AS).

This sequence belongs to the ThiG family. As to quaternary structure, homotetramer. Forms heterodimers with either ThiH or ThiS.

The protein localises to the cytoplasm. It carries out the reaction [ThiS sulfur-carrier protein]-C-terminal-Gly-aminoethanethioate + 2-iminoacetate + 1-deoxy-D-xylulose 5-phosphate = [ThiS sulfur-carrier protein]-C-terminal Gly-Gly + 2-[(2R,5Z)-2-carboxy-4-methylthiazol-5(2H)-ylidene]ethyl phosphate + 2 H2O + H(+). It functions in the pathway cofactor biosynthesis; thiamine diphosphate biosynthesis. Its function is as follows. Catalyzes the rearrangement of 1-deoxy-D-xylulose 5-phosphate (DXP) to produce the thiazole phosphate moiety of thiamine. Sulfur is provided by the thiocarboxylate moiety of the carrier protein ThiS. In vitro, sulfur can be provided by H(2)S. This Mycobacterium leprae (strain Br4923) protein is Thiazole synthase.